A 119-amino-acid chain; its full sequence is Anther-specific protein BCP1 (119 aa).

Positions 1–23 are cleaved as a signal peptide; it reads MGRQNVVVVFGLVFLAVLGLAAA. Over residues 24-42 the composition is skewed to low complexity; that stretch reads ASSPSPSASPSKAPSTSTP. Residues 24–95 form a disordered region; it reads ASSPSPSASP…PSGSADSADS (72 aa). At 24 to 98 the chain is on the extracellular side; it reads ASSPSPSASP…SADSADSGAA (75 aa). Residues 56–69 are compositionally biased toward acidic residues; that stretch reads TDDDAAASPGDDDV. Low complexity predominate over residues 82–95; sequence GSNGPSGSADSADS. The chain crosses the membrane as a helical span at residues 99-118; that stretch reads ALGVSAVVVGVTSIVGSFLF. Position 119 (F119) is a topological domain, cytoplasmic.

In terms of tissue distribution, expressed in mature pollen grains, developing microspores and tapetal cells.

Its subcellular location is the membrane. Required for pollen fertility and development. Active in both diploid tapetum and haploid microspores. Major pollen protein. This chain is Anther-specific protein BCP1 (BCP1), found in Brassica campestris (Field mustard).